The chain runs to 94 residues: Co-chaperonin GroES (94 aa).

Belongs to the GroES chaperonin family. As to quaternary structure, heptamer of 7 subunits arranged in a ring. Interacts with the chaperonin GroEL.

It is found in the cytoplasm. Its function is as follows. Together with the chaperonin GroEL, plays an essential role in assisting protein folding. The GroEL-GroES system forms a nano-cage that allows encapsulation of the non-native substrate proteins and provides a physical environment optimized to promote and accelerate protein folding. GroES binds to the apical surface of the GroEL ring, thereby capping the opening of the GroEL channel. In Streptococcus oralis, this protein is Co-chaperonin GroES.